Consider the following 399-residue polypeptide: PCI domain-containing protein 2 (399 aa).

Residues 210 to 391 form the PCI domain; sequence VTFKYYVGRK…QKLVVSKQNP (182 aa).

This sequence belongs to the CSN12 family.

This chain is PCI domain-containing protein 2 (pcid2), found in Xenopus laevis (African clawed frog).